The primary structure comprises 436 residues: Protein Z-dependent protease inhibitor (436 aa).

The signal sequence occupies residues 1 to 20 (MRVVSSLFLPVLLAEVWLVS). Asn23, Asn42, and Asn69 each carry an N-linked (GlcNAc...) asparagine glycan. The tract at residues 128–145 (AGPLILPALFKRVKETFS) is heparin-binding. Asn172, Asn189, and Asn287 each carry an N-linked (GlcNAc...) asparagine glycan.

Belongs to the serpin family. In terms of processing, phosphorylated by FAM20C in the extracellular medium. Expressed by the liver and secreted in plasma.

The protein resides in the secreted. Its function is as follows. Inhibits activity of the coagulation protease factor Xa in the presence of PROZ, calcium and phospholipids. Also inhibits factor XIa in the absence of cofactors. The sequence is that of Protein Z-dependent protease inhibitor (Serpina10) from Rattus norvegicus (Rat).